The chain runs to 652 residues: Zinc finger protein 432 (652 aa).

A KRAB domain is found at 8–79; that stretch reads LTLEDVTVEF…EDERHSRICP (72 aa). Y41 carries the post-translational modification 3'-nitrotyrosine. ADP-ribosylserine is present on residues S139 and S164. C2H2-type zinc fingers lie at residues 205-227, 233-255, 261-283, 289-311, 317-339, 345-367, 373-395, 401-423, 429-451, 457-479, 485-507, 513-535, 541-563, 567-591, 597-619, and 625-647; these read HVCS…ERVH, YGCT…QRIH, FICS…QRTH, YICN…QRNH, YICS…QRTH, YICS…QRNH, YICN…QRTH, YLCS…QRTH, YTCS…QRTH, YRCS…QRTH, FMCS…QQIH, KSCI…KQVH, YGCN…QRTH, and FVCS…QRTH. S246 carries the ADP-ribosylserine modification. An ADP-ribosylserine modification is found at S330. At S414 the chain carries ADP-ribosylserine.

It belongs to the krueppel C2H2-type zinc-finger protein family. In terms of assembly, interacts with PARP1 and several chromatin remodeling proteins; the interaction with PARP1 reshapes ZNF432 interacting proteins. Interacts with TRIM28; the interaction is independent of PARP1.

The protein resides in the nucleus. Functionally, homologous recombination repressor that functions as a poly(ADP-ribose) (PAR) reader regulating DNA damage response and PARP inhibition. Once recruited to DNA lesions via DNA-, in a PAR-dependent mechanism, stimulates PARP1 activity. Binds preferentially ssDNA and inhibits EXO1-mediated resection, probably through a PAR-independent DNA-binding mechanism. This chain is Zinc finger protein 432, found in Homo sapiens (Human).